Here is an 880-residue protein sequence, read N- to C-terminus: MEIYRKSAAETFTQLEATEKGLTTSEVTKRQEKYGFNELKNKKKDPLWKLFLETFKDPMVIVLVIAALVQLVLGEVVESLIIFLVLIVNSIISVVQTRKAESSLDALREMSAPVAKVIRDGSKQSIHARELVPGDVVILDAGDFVPADGRLFESGSLKIDEGMLTGESEAVEKYIDTIPDEVGLGDRVNMVFSGSLVVYGRGMFVVTGTASETEIGKIAGLLETAEAKQTPLQRKLESFSKKLGLGILALCVLIFAVEAGRVLLGDNSADMATAILNAFMFAVAVAVAAIPEALSSIVTIVLAVGTNKMAKQHAIIRKLPAVETLGSTSVICTDKTGTLTQNKMTVVDYYLPDGTKENFPESPENWSEGERRLIHIAVLCNDSNINSEGKELGDPTEVALIAFSNKNNQDYNEIREKFIREGEIPFDSDRKLMSTLHTFNENKAMLTKGGPDVMFARCSYVFLDGEEKPMTEEILAKLKETNEEFSNQALRVLAYGYKRMPADTTELKLEDEQDIVLVGLTAMIDPPREAVYASIEESKKAGIRTVMITGDHKTTAQAIGRDIGLMDADDIALTGQELDAMPEEELDKKLEHIAVYARVSPENKIRIVKAWQKKGKITAMTGDGVNDAPALKQADIGVAMGSGTDVAKDSAAMILTDDNFVSIVDAVGVGRTVFDNIKKSIAYLFAGNLGAIIAILFALVLDWINPFTALQLLFINLVNDSLPAIALGMEKAEPDVMKRKPRDINEGIFAGGTMRAVISRGVLIGIAVIISQYIGMQISPEMSVAMAFTTLILARTLQTFAARSNVQTAFGAGFFSNKYVIGAVLLCFVLYGITVLPGAREIFSIPASFGLHEWSIAAGLALAAVVMMEIIKVVQNKFFK.

The next 4 helical transmembrane spans lie at 47–67, 68–88, 243–263, and 271–291; these read LWKLFLETFKDPMVIVLVIAA, LVQLVLGEVVESLIIFLVLIV, LGLGILALCVLIFAVEAGRVL, and MATAILNAFMFAVAVAVAAIP. The Ca(2+) site is built by Val287, Ala288, Ile290, and Glu292. The active-site 4-aspartylphosphate intermediate is Asp334. Transmembrane regions (helical) follow at residues 681-701, 707-727, 756-776, 819-839, and 854-874; these read IAYLFAGNLGAIIAILFALVL, FTALQLLFINLVNDSLPAIAL, AVISRGVLIGIAVIISQYIGM, YVIGAVLLCFVLYGITVLPGA, and WSIAAGLALAAVVMMEIIKVV. Positions 716 and 720 each coordinate Ca(2+).

Belongs to the cation transport ATPase (P-type) (TC 3.A.3) family. Type IIA subfamily.

Its subcellular location is the cell membrane. The enzyme catalyses Ca(2+)(in) + ATP + H2O = Ca(2+)(out) + ADP + phosphate + H(+). Its activity is regulated as follows. Phosphorylation is inhibited by EGTA and vanadate. ATPase activity is stimulated by Sr(2+). Inhibited by very high concentrations of cyclopiazonic acid (CPA). Functionally, catalyzes the hydrolysis of ATP coupled with the transport of calcium. The transport is electrogenic with a probable ATP:Ca(2+):H(+) stoichiometry of 1:1:1. May have an important role in survival of the bacterium when stressed by a combination of a high calcium concentration and alkaline pH. The sequence is that of Calcium-transporting ATPase lmo0841 from Listeria monocytogenes serovar 1/2a (strain ATCC BAA-679 / EGD-e).